Reading from the N-terminus, the 708-residue chain is Leukotoxin translocation ATP-binding protein LktB (708 aa).

The region spanning 1–126 (MEANHQRNDL…ACYQGQLILV (126 aa)) is the Peptidase C39 domain. The region spanning 155-437 (FLETLIVSIF…LAQLWQDFQQ (283 aa)) is the ABC transmembrane type-1 domain. A run of 5 helical transmembrane segments spans residues 159–179 (LIVSIFLQIFALITPLFFQVV), 192–212 (LNIITVALAIVIIFEIVLSGL), 270–290 (ALTSVLDLLFSFIFFAVMWYY), 296–316 (LVILGSLPCYILWSIFISPIL), and 389–409 (VMVINLWLGAHLVISGDLSIG). In terms of domain architecture, ABC transporter spans 469-704 (ISFKNIRFRY…SNGLYSYLHQ (236 aa)). 503–510 (GRSGSGKS) contacts ATP.

Belongs to the ABC transporter superfamily. Protein-1 exporter (TC 3.A.1.109) family. Homodimer.

It is found in the cell inner membrane. It carries out the reaction ATP + H2O + proteinSide 1 = ADP + phosphate + proteinSide 2.. Its function is as follows. Part of the ABC transporter complex LktBD involved in leukotoxin export. Transmembrane domains (TMD) form a pore in the inner membrane and the ATP-binding domain (NBD) is responsible for energy generation. The polypeptide is Leukotoxin translocation ATP-binding protein LktB (lktB) (Mannheimia haemolytica (Pasteurella haemolytica)).